Consider the following 421-residue polypeptide: 3-isopropylmalate dehydratase large subunit (421 aa).

[4Fe-4S] cluster-binding residues include Cys292, Cys352, and Cys355.

This sequence belongs to the aconitase/IPM isomerase family. LeuC type 2 subfamily. As to quaternary structure, heterodimer of LeuC and LeuD. [4Fe-4S] cluster serves as cofactor.

It catalyses the reaction (2R,3S)-3-isopropylmalate = (2S)-2-isopropylmalate. Its pathway is amino-acid biosynthesis; L-leucine biosynthesis; L-leucine from 3-methyl-2-oxobutanoate: step 2/4. In terms of biological role, catalyzes the isomerization between 2-isopropylmalate and 3-isopropylmalate, via the formation of 2-isopropylmaleate. This is 3-isopropylmalate dehydratase large subunit from Herpetosiphon aurantiacus (strain ATCC 23779 / DSM 785 / 114-95).